The chain runs to 1868 residues: Protein TIC 214 (1868 aa).

A run of 6 helical transmembrane segments spans residues 11–31, 64–84, 87–107, 126–146, 166–186, and 221–241; these read LLLL…YYGF, FIMG…HLAL, PHTL…FFWN, LSIQ…HFIL, ILFV…LMKS, and IFSI…PSPI. Residues 248–276 are compositionally biased toward basic and acidic residues; the sequence is ESSKGEEKKKTEKERDVEMETISKTKKIE. Disordered stretches follow at residues 248–277, 617–643, 658–700, 782–806, and 1537–1607; these read ESSK…KIEQ, FDFE…GIRS, DEDT…QAEE, TSDY…KRKE, and YIDP…RKKK. A compositionally biased stretch (acidic residues) spans 617-636; that stretch reads FDFEEEEEEEEEEDDEEEPT. The segment covering 674-683 has biased composition (polar residues); the sequence is AKNSDQAKNS. Basic and acidic residues-rich tracts occupy residues 684–700, 789–806, and 1537–1576; these read DQAK…QAEE, GAKE…KRKE, and YIDP…ERQH.

The protein belongs to the TIC214 family. As to quaternary structure, part of the Tic complex.

The protein resides in the plastid. Its subcellular location is the chloroplast inner membrane. Its function is as follows. Involved in protein precursor import into chloroplasts. May be part of an intermediate translocation complex acting as a protein-conducting channel at the inner envelope. The sequence is that of Protein TIC 214 from Nuphar advena (Common spatterdock).